The chain runs to 738 residues: Polyribonucleotide nucleotidyltransferase (738 aa).

Positions 514 and 520 each coordinate Mg(2+). One can recognise a KH domain in the interval Pro-580–Ile-639. The 73-residue stretch at Gly-651–Val-723 folds into the S1 motif domain.

The protein belongs to the polyribonucleotide nucleotidyltransferase family. The cofactor is Mg(2+).

The protein resides in the cytoplasm. It carries out the reaction RNA(n+1) + phosphate = RNA(n) + a ribonucleoside 5'-diphosphate. Its function is as follows. Involved in mRNA degradation. Catalyzes the phosphorolysis of single-stranded polyribonucleotides processively in the 3'- to 5'-direction. The chain is Polyribonucleotide nucleotidyltransferase from Streptomyces avermitilis (strain ATCC 31267 / DSM 46492 / JCM 5070 / NBRC 14893 / NCIMB 12804 / NRRL 8165 / MA-4680).